The chain runs to 108 residues: Phosphoribosyl-AMP cyclohydrolase (108 aa).

Mg(2+) is bound at residue aspartate 72. Residue cysteine 73 participates in Zn(2+) binding. Mg(2+) contacts are provided by aspartate 74 and aspartate 76. Zn(2+)-binding residues include cysteine 89 and cysteine 96.

It belongs to the PRA-CH family. In terms of assembly, homodimer. Requires Mg(2+) as cofactor. The cofactor is Zn(2+).

The protein localises to the cytoplasm. It catalyses the reaction 1-(5-phospho-beta-D-ribosyl)-5'-AMP + H2O = 1-(5-phospho-beta-D-ribosyl)-5-[(5-phospho-beta-D-ribosylamino)methylideneamino]imidazole-4-carboxamide. It functions in the pathway amino-acid biosynthesis; L-histidine biosynthesis; L-histidine from 5-phospho-alpha-D-ribose 1-diphosphate: step 3/9. In terms of biological role, catalyzes the hydrolysis of the adenine ring of phosphoribosyl-AMP. This chain is Phosphoribosyl-AMP cyclohydrolase, found in Archaeoglobus fulgidus (strain ATCC 49558 / DSM 4304 / JCM 9628 / NBRC 100126 / VC-16).